Here is a 417-residue protein sequence, read N- to C-terminus: Glutamyl-tRNA reductase (417 aa).

Residues 49-52 (TCNR), S105, 110-112 (ETQ), and Q116 contribute to the substrate site. C50 acts as the Nucleophile in catalysis. 185-190 (GAGEMI) contacts NADP(+).

It belongs to the glutamyl-tRNA reductase family. In terms of assembly, homodimer.

It catalyses the reaction (S)-4-amino-5-oxopentanoate + tRNA(Glu) + NADP(+) = L-glutamyl-tRNA(Glu) + NADPH + H(+). The protein operates within porphyrin-containing compound metabolism; protoporphyrin-IX biosynthesis; 5-aminolevulinate from L-glutamyl-tRNA(Glu): step 1/2. Functionally, catalyzes the NADPH-dependent reduction of glutamyl-tRNA(Glu) to glutamate 1-semialdehyde (GSA). This is Glutamyl-tRNA reductase from Chromobacterium violaceum (strain ATCC 12472 / DSM 30191 / JCM 1249 / CCUG 213 / NBRC 12614 / NCIMB 9131 / NCTC 9757 / MK).